Reading from the N-terminus, the 227-residue chain is Ribonuclease 3 (227 aa).

In terms of domain architecture, RNase III spans 4-133 (FEKLETLLGY…LIAAIYLDSN (130 aa)). Glu46 provides a ligand contact to Mg(2+). Asp50 is a catalytic residue. Mg(2+) contacts are provided by Asn119 and Glu122. Glu122 is a catalytic residue. The DRBM domain maps to 158-226 (DPKTALQEWA…ARCLLHRLKN (69 aa)).

This sequence belongs to the ribonuclease III family. In terms of assembly, homodimer. The cofactor is Mg(2+).

Its subcellular location is the cytoplasm. It carries out the reaction Endonucleolytic cleavage to 5'-phosphomonoester.. Digests double-stranded RNA. Involved in the processing of primary rRNA transcript to yield the immediate precursors to the large and small rRNAs (23S and 16S). Processes some mRNAs, and tRNAs when they are encoded in the rRNA operon. Processes pre-crRNA and tracrRNA of type II CRISPR loci if present in the organism. The sequence is that of Ribonuclease 3 from Rickettsia typhi (strain ATCC VR-144 / Wilmington).